Here is a 149-residue protein sequence, read N- to C-terminus: NADH-quinone oxidoreductase subunit A (149 aa).

Transmembrane regions (helical) follow at residues 16–36 (FGIF…GAWF), 68–88 (FYLV…LFAW), and 98–118 (LGFI…VYLV).

The protein belongs to the complex I subunit 3 family. In terms of assembly, NDH-1 is composed of 13 different subunits. Subunits NuoA, H, J, K, L, M, N constitute the membrane sector of the complex.

It is found in the cell inner membrane. It carries out the reaction a quinone + NADH + 5 H(+)(in) = a quinol + NAD(+) + 4 H(+)(out). Its function is as follows. NDH-1 shuttles electrons from NADH, via FMN and iron-sulfur (Fe-S) centers, to quinones in the respiratory chain. The immediate electron acceptor for the enzyme in this species is believed to be ubiquinone. Couples the redox reaction to proton translocation (for every two electrons transferred, four hydrogen ions are translocated across the cytoplasmic membrane), and thus conserves the redox energy in a proton gradient. The protein is NADH-quinone oxidoreductase subunit A of Cronobacter sakazakii (strain ATCC BAA-894) (Enterobacter sakazakii).